Here is a 289-residue protein sequence, read N- to C-terminus: Heme oxygenase 1 (289 aa).

The Cytoplasmic segment spans residues 1–266; sequence MERPQLDSMS…SQISTSSSQT (266 aa). Residues lysine 18, histidine 25, tyrosine 134, and arginine 183 each coordinate heme b. The interval 225–261 is disordered; it reads HKDQSPSQTEFLRQRPASLVQDTTSAETPRGKSQIST. Phosphoserine occurs at positions 229 and 242. The segment covering 244–261 has biased composition (polar residues); that stretch reads VQDTTSAETPRGKSQIST. The chain crosses the membrane as a helical; Anchor for type IV membrane protein span at residues 267 to 289; the sequence is PLLRWVLTLSFLLATVAVGIYAM.

Belongs to the heme oxygenase family. Homodimer and higher order homooligomer. Oligomerization is crucial for its stability and function in the endoplasmic reticulum. Interacts with FLVCR2; this interaction is potentiated in the presence of heme. A soluble form arises by proteolytic removal of the membrane anchor.

It localises to the endoplasmic reticulum membrane. The catalysed reaction is heme b + 3 reduced [NADPH--hemoprotein reductase] + 3 O2 = biliverdin IXalpha + CO + Fe(2+) + 3 oxidized [NADPH--hemoprotein reductase] + 3 H2O + H(+). With respect to regulation, inhibited by metalloporphyrins such as Sn- and Zn-protoporphyrins. Catalyzes the oxidative cleavage of heme at the alpha-methene bridge carbon, released as carbon monoxide (CO), to generate biliverdin IXalpha, while releasing the central heme iron chelate as ferrous iron. Affords protection against programmed cell death and this cytoprotective effect relies on its ability to catabolize free heme and prevent it from sensitizing cells to undergo apoptosis. In terms of biological role, catalyzes the oxidative cleavage of heme at the alpha-methene bridge carbon, released as carbon monoxide (CO), to generate biliverdin IXalpha, while releasing the central heme iron chelate as ferrous iron. The sequence is that of Heme oxygenase 1 (Hmox1) from Rattus norvegicus (Rat).